We begin with the raw amino-acid sequence, 455 residues long: Gamma-aminobutyric acid receptor subunit alpha-1 (455 aa).

Residues 1-27 (MKKSRGLSDYLWAWTLILSTLSGRSYG) form the signal peptide. Over 28-252 (QPSQDELKDN…FHLKRKIGYF (225 aa)) the chain is Extracellular. Asparagine 37 carries an N-linked (GlcNAc...) asparagine glycan. Arginine 93 is a 4-aminobutanoate binding site. An N-linked (GlcNAc...) asparagine glycan is attached at asparagine 137. Threonine 156 is a 4-aminobutanoate binding site. Cysteine 165 and cysteine 179 are oxidised to a cystine. The helical transmembrane segment at 253–273 (VIQTYLPCIMTVILSQVSFWL) threads the bilayer. Topologically, residues 274–278 (NRESV) are cytoplasmic. A helical membrane pass occupies residues 279 to 300 (PARTVFGVTTVLTMTTLSISAR). The Extracellular segment spans residues 301–310 (NSLPKVAYAT). Residues 311 to 332 (AMDWFIAVCYAFVFSALIEFAT) traverse the membrane as a helical segment. Residues 333–420 (VNYFTKRGYA…TFNSVSKIDR (88 aa)) lie on the Cytoplasmic side of the membrane. A helical membrane pass occupies residues 421–440 (LSRIAFPLLFGIFNLVYWAT). Residues 441 to 455 (YLNREPQLKAPTPHQ) are Extracellular-facing.

This sequence belongs to the ligand-gated ion channel (TC 1.A.9) family. Gamma-aminobutyric acid receptor (TC 1.A.9.5) subfamily. GABRA1 sub-subfamily. As to quaternary structure, heteropentamer, formed by a combination of alpha (GABRA1-6), beta (GABRB1-3), gamma (GABRG1-3), delta (GABRD), epsilon (GABRE), rho (GABRR1-3), pi (GABRP) and theta (GABRQ) subunits, each subunit exhibiting distinct physiological and pharmacological properties. Interacts with UBQLN1. Interacts with TRAK1. Interacts with KIF21B. Identified in a complex of 720 kDa composed of LHFPL4, NLGN2, GABRA1, GABRB2, GABRG2 and GABRB3. Interacts with LHFPL4. Interacts with NLGN2. Interacts with SHISA7; interaction leads to the regulation of GABA(A) receptor trafficking, channel deactivation kinetics and pharmacology. In terms of processing, glycosylated. In terms of tissue distribution, expressed in the cerebellum.

Its subcellular location is the postsynaptic cell membrane. The protein localises to the cell membrane. The protein resides in the cytoplasmic vesicle membrane. It catalyses the reaction chloride(in) = chloride(out). Allosterically activated by benzodiazepines, the neuroanesthetic alphaxalone and pentobarbital. Inhibited by the antagonist bicuculline. Potentiated by histamine. Alpha subunit of the heteropentameric ligand-gated chloride channel gated by Gamma-aminobutyric acid (GABA), a major inhibitory neurotransmitter in the brain. GABA-gated chloride channels, also named GABA(A) receptors (GABAAR), consist of five subunits arranged around a central pore and contain GABA active binding site(s) located at the alpha and beta subunit interface(s). When activated by GABA, GABAARs selectively allow the flow of chloride anions across the cell membrane down their electrochemical gradient. Alpha-1/GABRA1-containing GABAARs are largely synaptic. Chloride influx into the postsynaptic neuron following GABAAR opening decreases the neuron ability to generate a new action potential, thereby reducing nerve transmission. GABAARs containing alpha-1 and beta-2 or -3 subunits exhibit synaptogenic activity; the gamma-2 subunit being necessary but not sufficient to induce rapid synaptic contacts formation. GABAARs function also as histamine receptor where histamine binds at the interface of two neighboring beta subunits and potentiates GABA response. GABAARs containing alpha, beta and epsilon subunits also permit spontaneous chloride channel activity while preserving the structural information required for GABA-gated openings. Alpha-1-mediated plasticity in the orbitofrontal cortex regulates context-dependent action selection. Together with rho subunits, may also control neuronal and glial GABAergic transmission in the cerebellum. This Mus musculus (Mouse) protein is Gamma-aminobutyric acid receptor subunit alpha-1.